The primary structure comprises 664 residues: UV-stimulated scaffold protein A homolog (664 aa).

A VHS-like region spans residues 10-153 (KVIGLIEKAT…LKNTLKLKFP (144 aa)). Residues 148–180 (LKLKFPDLQANAARIQRERQEREMKTKEILRNK) adopt a coiled-coil conformation. 2 disordered regions span residues 330–350 (HGNEETNEEEEDIWEEDDGKV) and 362–403 (MRTQ…GNSL). A compositionally biased stretch (acidic residues) spans 334-347 (ETNEEEEDIWEEDD). The segment covering 363–374 (RTQQSENSSLPS) has biased composition (polar residues). Residues 377–387 (EAKKSTSEARS) show a composition bias toward basic and acidic residues. Residues 388–402 (NKVSNTKKVGSSGNS) are compositionally biased toward polar residues. A UVSSA-type zinc finger spans residues 473 to 500 (TPPCRASLKKGGLCQRRDLRVCPFHGPI). The Zn(2+) site is built by Cys476, Cys486, Cys494, and His497. Disordered stretches follow at residues 514–546 (SPLDESENQTSSTSGTNQDVSMDETTSDSDPNQ) and 640–664 (VKGTNPQQLAQGNDEKCRDTSANQW). Polar residues-rich tracts occupy residues 521 to 533 (NQTSSTSGTNQDV) and 640 to 650 (VKGTNPQQLAQ).

This sequence belongs to the UVSSA family.

The protein localises to the chromosome. The chain is UV-stimulated scaffold protein A homolog from Arabidopsis thaliana (Mouse-ear cress).